The chain runs to 626 residues: Janus kinase and microtubule-interacting protein 1 (626 aa).

A mediates association with microtubules region spans residues 1 to 365; it reads MSKKGRSKGE…KIKNLTRENV (365 aa). Coiled-coil stretches lie at residues 19 to 254 and 284 to 413; these read VQMA…REAE and ERDV…DDLS. The segment at 365–626 is mediates interaction with TYK2 and GABBR1; the sequence is VEMKEKLSAQ…ILFEPKLKFM (262 aa). S382 bears the Phosphoserine mark. Residues 452–461 are compositionally biased toward polar residues; the sequence is ETLSETSCNT. Positions 452 to 480 are disordered; sequence ETLSETSCNTDRTDRAPATPEEDLDDTTT. T470 is subject to Phosphothreonine. Positions 490-604 form a coiled coil; that stretch reads QLTREYQALQ…EFRVLELEVR (115 aa).

This sequence belongs to the JAKMIP family. As to quaternary structure, homodimer. Forms a complex with GABBR1 and KIF5B/kinesin-1. Interacts with JAK1 and TYK2. Phosphorylated.

It is found in the cytoplasm. The protein resides in the cytoskeleton. Its subcellular location is the membrane. Its function is as follows. Associates with microtubules and may play a role in the microtubule-dependent transport of the GABA-B receptor. May play a role in JAK1 signaling and regulate microtubule cytoskeleton rearrangements. This is Janus kinase and microtubule-interacting protein 1 (JAKMIP1) from Bos taurus (Bovine).